A 177-amino-acid chain; its full sequence is Bifunctional protein PyrR (177 aa).

The PRPP-binding motif lies at 98–110 (IILVDDVIYTGRT).

The protein belongs to the purine/pyrimidine phosphoribosyltransferase family. PyrR subfamily. In terms of assembly, homodimer and homohexamer; in equilibrium.

It carries out the reaction UMP + diphosphate = 5-phospho-alpha-D-ribose 1-diphosphate + uracil. Regulates transcriptional attenuation of the pyrimidine nucleotide (pyr) operon by binding in a uridine-dependent manner to specific sites on pyr mRNA. This disrupts an antiterminator hairpin in the RNA and favors formation of a downstream transcription terminator, leading to a reduced expression of downstream genes. Functionally, also displays a weak uracil phosphoribosyltransferase activity which is not physiologically significant. The chain is Bifunctional protein PyrR from Clostridium kluyveri (strain ATCC 8527 / DSM 555 / NBRC 12016 / NCIMB 10680 / K1).